Here is a 428-residue protein sequence, read N- to C-terminus: MNYLFKNGRYMNEEGKIVATDLLVQDGKIAKVAENITADNAEVIDVNGKLIAPGLVDVHVHLREPGGEHKETIETGTLAAAKGGFTTICAMPNTRPVPDCREHMEDLQKRIEEKAHVNVLPYGAITVRQAGSEMTDFETLKELGAFAFTDDGVGVQDANMMLAAMKRAAKLDMAVVAHCEENTLINKGCVHEGKFSEKHGLNGIPSVCESVHIARDILLAEAADCHYHVCHVSTKGSVRVIRDAKRAGIKVTAEVTPHHLVLCEDDIPSADPNFKMNPPLRGKEDHAALIEGLLDGTIDMIATDHAPHTAEEKAQGIERAPFGITGFETAFPLLYTNLVKKGVITLEQLIQFLTEKPADTFGLEAGRLKEGRAADITIIDLEQEEEIDPTTFLSKGKNTPFAGWKCQGWPVMTIVGGKIAWQKESALV.

Zn(2+) is bound by residues His59 and His61. Substrate contacts are provided by residues 61 to 63 and Asn93; that span reads HLR. Zn(2+)-binding residues include Asp151, His178, and His231. Substrate is bound at residue Asn277. Asp304 is a binding site for Zn(2+). Asp304 is an active-site residue. Substrate is bound by residues His308 and 322-323; that span reads FG.

It belongs to the metallo-dependent hydrolases superfamily. DHOase family. Class I DHOase subfamily. Zn(2+) serves as cofactor.

It carries out the reaction (S)-dihydroorotate + H2O = N-carbamoyl-L-aspartate + H(+). Its pathway is pyrimidine metabolism; UMP biosynthesis via de novo pathway; (S)-dihydroorotate from bicarbonate: step 3/3. Its function is as follows. Catalyzes the reversible cyclization of carbamoyl aspartate to dihydroorotate. This chain is Dihydroorotase, found in Bacillus cereus (strain B4264).